The sequence spans 148 residues: Large ribosomal subunit protein uL15 (148 aa).

Basic residues predominate over residues 1-30 (MPSKLRKTRKLRGHVSHGHGRIGKHRKHPG). Positions 1–38 (MPSKLRKTRKLRGHVSHGHGRIGKHRKHPGGRGNAGGM) are disordered.

Belongs to the universal ribosomal protein uL15 family. As to quaternary structure, component of the large ribosomal subunit.

The protein resides in the cytoplasm. Functionally, component of the large ribosomal subunit. The ribosome is a large ribonucleoprotein complex responsible for the synthesis of proteins in the cell. This chain is Large ribosomal subunit protein uL15 (rpl27a), found in Xenopus laevis (African clawed frog).